A 483-amino-acid polypeptide reads, in one-letter code: Glutamyl-tRNA(Gln) amidotransferase subunit A (483 aa).

Catalysis depends on charge relay system residues lysine 76 and serine 151. Serine 175 serves as the catalytic Acyl-ester intermediate.

The protein belongs to the amidase family. GatA subfamily. In terms of assembly, heterotrimer of A, B and C subunits.

It catalyses the reaction L-glutamyl-tRNA(Gln) + L-glutamine + ATP + H2O = L-glutaminyl-tRNA(Gln) + L-glutamate + ADP + phosphate + H(+). Its function is as follows. Allows the formation of correctly charged Gln-tRNA(Gln) through the transamidation of misacylated Glu-tRNA(Gln) in organisms which lack glutaminyl-tRNA synthetase. The reaction takes place in the presence of glutamine and ATP through an activated gamma-phospho-Glu-tRNA(Gln). The sequence is that of Glutamyl-tRNA(Gln) amidotransferase subunit A from Pseudomonas fluorescens (strain SBW25).